The following is a 292-amino-acid chain: ATP synthase gamma chain (292 aa).

The protein belongs to the ATPase gamma chain family. In terms of assembly, F-type ATPases have 2 components, CF(1) - the catalytic core - and CF(0) - the membrane proton channel. CF(1) has five subunits: alpha(3), beta(3), gamma(1), delta(1), epsilon(1). CF(0) has three main subunits: a, b and c.

Its subcellular location is the cell inner membrane. In terms of biological role, produces ATP from ADP in the presence of a proton gradient across the membrane. The gamma chain is believed to be important in regulating ATPase activity and the flow of protons through the CF(0) complex. The protein is ATP synthase gamma chain of Chlorobaculum tepidum (strain ATCC 49652 / DSM 12025 / NBRC 103806 / TLS) (Chlorobium tepidum).